Consider the following 63-residue polypeptide: uncharacterized protein (63 aa).

The protein localises to the mitochondrion. This is an uncharacterized protein from Marchantia polymorpha (Common liverwort).